The sequence spans 329 residues: Cytosolic arginine sensor for mTORC1 subunit 2 (329 aa).

2 consecutive ACT domains span residues 72-139 (ADAT…MHTL) and 262-322 (ELWK…NALQ).

It belongs to the GATS family. May form homodimers and heterodimers.

It is found in the cytoplasm. The protein resides in the cytosol. Functions as a negative regulator of the TORC1 signaling pathway. The polypeptide is Cytosolic arginine sensor for mTORC1 subunit 2 (Xenopus tropicalis (Western clawed frog)).